A 37-amino-acid polypeptide reads, in one-letter code: Esculentin-2JDb (37 aa).

Residues Cys31 and Cys37 are joined by a disulfide bond.

In terms of tissue distribution, expressed by the skin glands.

The protein localises to the secreted. Its function is as follows. Has antibacterial activity against E.coli and S.aureus strains. The sequence is that of Esculentin-2JDb from Odorrana jingdongensis (Jingdong frog).